A 408-amino-acid chain; its full sequence is SERPINE1 mRNA-binding protein 1 (408 aa).

At Ser-25 the chain carries Phosphoserine. 2 disordered regions span residues 33-292 (AAEN…TLDE) and 328-408 (SKSE…PALA). Positions 51-68 (AKSAAQAAAQTNSNAAGK) are enriched in low complexity. N6-acetyllysine; alternate is present on Lys-52. Lys-52 is covalently cross-linked (Glycyl lysine isopeptide (Lys-Gly) (interchain with G-Cter in SUMO1); alternate). Lys-68 carries the post-translational modification N6-acetyllysine. 3 stretches are compositionally biased toward basic and acidic residues: residues 70–80 (LRKESQKDRKN), 89–114 (VDKK…RRPD), and 122–162 (KIID…DRPI). Residue Lys-102 forms a Glycyl lysine isopeptide (Lys-Gly) (interchain with G-Cter in SUMO1); alternate linkage. A Glycyl lysine isopeptide (Lys-Gly) (interchain with G-Cter in SUMO2); alternate cross-link involves residue Lys-102. N6-acetyllysine is present on residues Lys-122 and Lys-140. The segment covering 164-182 (GRGGLGRGRGGRGRGMGRG) has biased composition (gly residues). An omega-N-methylarginine mark is found at Arg-165 and Arg-188. The segment covering 183–199 (DGFDSRGKREFDRHSGS) has biased composition (basic and acidic residues). Position 197 is a phosphoserine (Ser-197). At Ser-199 the chain carries Phosphoserine; by MTOR. Ser-203, Ser-205, and Ser-208 each carry phosphoserine. Lys-211 is modified (N6-acetyllysine; alternate). A Glycyl lysine isopeptide (Lys-Gly) (interchain with G-Cter in SUMO2); alternate cross-link involves residue Lys-211. Position 216 is an omega-N-methylarginine (Arg-216). The residue at position 221 (Ser-221) is a Phosphoserine. His-222 is covalently cross-linked (Glycyl lysine isopeptide (Lys-Gly) (interchain with G-Cter in SUMO2)). The residue at position 226 (Thr-226) is a Phosphothreonine; by MTOR. A Glycyl lysine isopeptide (Lys-Gly) (interchain with G-Cter in SUMO1); alternate cross-link involves residue Lys-228. Residue Lys-228 forms a Glycyl lysine isopeptide (Lys-Gly) (interchain with G-Cter in SUMO2); alternate linkage. A Glycyl lysine isopeptide (Lys-Gly) (interchain with G-Cter in SUMO2) cross-link involves residue Lys-228. Phosphoserine occurs at positions 231, 234, and 237. At Ser-234 the chain carries Phosphothreonine. Phosphothreonine is present on Lys-240. A compositionally biased stretch (polar residues) spans 240–253 (KQISYNYSDLDQSN). A compositionally biased stretch (basic and acidic residues) spans 261 to 275 (GEEHHPVADTENKEN). Lys-281 is covalently cross-linked (Glycyl lysine isopeptide (Lys-Gly) (interchain with G-Cter in SUMO1); alternate). Residue Lys-281 forms a Glycyl lysine isopeptide (Lys-Gly) (interchain with G-Cter in SUMO2); alternate linkage. 2 stretches are compositionally biased toward basic and acidic residues: residues 282–292 (EEGPKEMTLDE) and 328–342 (SKSE…VMDH). Lys-329 is modified (N6-acetyllysine). The residue at position 330 (Ser-330) is a Phosphoserine. The span at 363 to 372 (GRPGRGGRGG) shows a compositional bias: gly residues. Omega-N-methylarginine occurs at positions 364, 367, and 370. A phosphoserine mark is found at Ser-392 and Ser-394.

This sequence belongs to the SERBP1-HABP4 family. Associates with mature 80S ribosomes. Interacts with EEF2/eEF2; interaction sequesters EEF2/eEF2 at the A-site of the ribosome, thereby blocking the interaction sites of the mRNA-tRNA complex, promoting ribosome stabilization and hibernation. Interacts with SPIN1. Interacts with CHD3 and TDRD3. Interacts with ZDHHC17 (via ANK repeats). In terms of processing, phosphorylation by MTOR inhibits SERBP1 and relieves ribosome hibernation. As to expression, expressed at high level in the heart, skeletal muscle and kidney, and at low levels in placenta, liver and brain.

The protein localises to the cytoplasm. Its subcellular location is the nucleus. It is found in the perinuclear region. In terms of biological role, ribosome-binding protein that promotes ribosome hibernation, a process during which ribosomes are stabilized in an inactive state and preserved from proteasomal degradation. Acts via its association with EEF2/eEF2 factor, sequestering EEF2/eEF2 at the A-site of the ribosome and promoting ribosome stabilization and storage in an inactive state. May also play a role in the regulation of mRNA stability: binds to the 3'-most 134 nt of the SERPINE1/PAI1 mRNA, a region which confers cyclic nucleotide regulation of message decay. Seems to play a role in PML-nuclear bodies formation. The chain is SERPINE1 mRNA-binding protein 1 from Homo sapiens (Human).